A 186-amino-acid chain; its full sequence is Peptidyl-tRNA hydrolase (186 aa).

Tyrosine 16 provides a ligand contact to tRNA. Histidine 21 acts as the Proton acceptor in catalysis. 2 residues coordinate tRNA: tyrosine 60 and asparagine 62.

This sequence belongs to the PTH family. As to quaternary structure, monomer.

Its subcellular location is the cytoplasm. The catalysed reaction is an N-acyl-L-alpha-aminoacyl-tRNA + H2O = an N-acyl-L-amino acid + a tRNA + H(+). In terms of biological role, hydrolyzes ribosome-free peptidyl-tRNAs (with 1 or more amino acids incorporated), which drop off the ribosome during protein synthesis, or as a result of ribosome stalling. Catalyzes the release of premature peptidyl moieties from peptidyl-tRNA molecules trapped in stalled 50S ribosomal subunits, and thus maintains levels of free tRNAs and 50S ribosomes. The polypeptide is Peptidyl-tRNA hydrolase (Tropheryma whipplei (strain TW08/27) (Whipple's bacillus)).